The following is a 154-amino-acid chain: Mitochondrial fission 1 protein (154 aa).

Over 1–124 (MEDLLNEVVP…KEIDKEVAKG (124 aa)) the chain is Cytoplasmic. Residues 125–145 (MVVAGGAALVLGGILGLGIAM) form a helical membrane-spanning segment. Residues 146–154 (ARNKQKREK) are Mitochondrial intermembrane-facing.

This sequence belongs to the FIS1 family.

It is found in the mitochondrion outer membrane. Involved in the fragmentation of the mitochondrial network and its perinuclear clustering. Functions downstream of Pink1 and upstream of Drp1 to regulate mitochondrial fission. In Drosophila melanogaster (Fruit fly), this protein is Mitochondrial fission 1 protein.